A 463-amino-acid chain; its full sequence is ATP sulfurylase 1, chloroplastic (463 aa).

A chloroplast-targeting transit peptide spans 1-48; sequence MASMAAVLSKTPFLSQPLTKSSPNSDLPFAAVSFPSKSLRRRVGSIRA.

The protein belongs to the sulfate adenylyltransferase family. In terms of assembly, homotetramer.

Its subcellular location is the plastid. It localises to the chloroplast stroma. The catalysed reaction is sulfate + ATP + H(+) = adenosine 5'-phosphosulfate + diphosphate. It participates in sulfur metabolism; hydrogen sulfide biosynthesis; sulfite from sulfate: step 1/3. Functionally, mediates selenate (Se) reduction, and promotes Se and sulfur (S) uptake and assimilation. This is ATP sulfurylase 1, chloroplastic (APS1) from Arabidopsis thaliana (Mouse-ear cress).